The primary structure comprises 1417 residues: DNA-directed RNA polymerase subunit beta' (1417 aa).

Positions 71, 73, 86, and 89 each coordinate Zn(2+). Mg(2+) contacts are provided by Asp-461, Asp-463, and Asp-465. Positions 815, 889, 896, and 899 each coordinate Zn(2+).

The protein belongs to the RNA polymerase beta' chain family. In terms of assembly, the RNAP catalytic core consists of 2 alpha, 1 beta, 1 beta' and 1 omega subunit. When a sigma factor is associated with the core the holoenzyme is formed, which can initiate transcription. Requires Mg(2+) as cofactor. Zn(2+) is required as a cofactor.

The catalysed reaction is RNA(n) + a ribonucleoside 5'-triphosphate = RNA(n+1) + diphosphate. Its function is as follows. DNA-dependent RNA polymerase catalyzes the transcription of DNA into RNA using the four ribonucleoside triphosphates as substrates. The polypeptide is DNA-directed RNA polymerase subunit beta' (Pasteurella multocida (strain Pm70)).